Consider the following 605-residue polypeptide: Bifunctional purine biosynthesis protein ADE16 (605 aa).

One can recognise an MGS-like domain in the interval 1-147 (MSSEAPIALL…KNHGRVSIIS (147 aa)). Residues 35–38 (SGGT), 65–68 (RVKT), 102–103 (CN), and 126–127 (DI) each bind IMP. Catalysis depends on lysine 138, which acts as the Proton donor/acceptor; for FAICAR cyclization activity. 5-amino-1-(5-phospho-beta-D-ribosyl)imidazole-4-carboxamide contacts are provided by residues 219-220 (RY), histidine 279, glycine 327, aspartate 350, asparagine 442, and arginine 462. Residue histidine 279 is the Proton acceptor; for AICAR formyltransferase activity of the active site. Isoleucine 463 provides a ligand contact to (6R)-10-formyltetrahydrofolate. 5-amino-1-(5-phospho-beta-D-ribosyl)imidazole-4-carboxamide is bound at residue phenylalanine 554. A (6R)-10-formyltetrahydrofolate-binding site is contributed by aspartate 559. Arginine 601 contributes to the 5-amino-1-(5-phospho-beta-D-ribosyl)imidazole-4-carboxamide binding site.

The protein belongs to the PurH family. In terms of assembly, homodimer.

Its subcellular location is the cytoplasm. It is found in the cytosol. The enzyme catalyses (6R)-10-formyltetrahydrofolate + 5-amino-1-(5-phospho-beta-D-ribosyl)imidazole-4-carboxamide = 5-formamido-1-(5-phospho-D-ribosyl)imidazole-4-carboxamide + (6S)-5,6,7,8-tetrahydrofolate. It carries out the reaction IMP + H2O = 5-formamido-1-(5-phospho-D-ribosyl)imidazole-4-carboxamide. It participates in purine metabolism; IMP biosynthesis via de novo pathway; 5-formamido-1-(5-phospho-D-ribosyl)imidazole-4-carboxamide from 5-amino-1-(5-phospho-D-ribosyl)imidazole-4-carboxamide (10-formyl THF route): step 1/1. It functions in the pathway purine metabolism; IMP biosynthesis via de novo pathway; IMP from 5-formamido-1-(5-phospho-D-ribosyl)imidazole-4-carboxamide: step 1/1. Functionally, bifunctional enzyme that catalyzes the last two steps of purine biosynthesis. Acts as a transformylase that incorporates a formyl group to the AMP analog AICAR (5-amino-1-(5-phospho-beta-D-ribosyl)imidazole-4-carboxamide) to produce the intermediate formyl-AICAR (FAICAR). Also catalyzes the cyclization of FAICAR to IMP. This chain is Bifunctional purine biosynthesis protein ADE16, found in Cryptococcus neoformans var. grubii serotype A (strain H99 / ATCC 208821 / CBS 10515 / FGSC 9487) (Filobasidiella neoformans var. grubii).